The chain runs to 112 residues: uncharacterized protein (112 aa).

Polar residues predominate over residues 1–11 (MAESVASSESL). The tract at residues 1 to 32 (MAESVASSESLPQMKPEEPESKKSPSREAIPK) is disordered. Residues 15-31 (KPEEPESKKSPSREAIP) are compositionally biased toward basic and acidic residues. A helical membrane pass occupies residues 81 to 101 (VVFIFMIAIMSMLVIGLVVCG).

The protein resides in the membrane. This is an uncharacterized protein from Encephalitozoon cuniculi (strain GB-M1) (Microsporidian parasite).